The chain runs to 89 residues: Protein WFDC9 (89 aa).

An N-terminal signal peptide occupies residues 1–23 (MKPWILLLVMFISGVVMLLPVLG).

The protein resides in the secreted. This Homo sapiens (Human) protein is Protein WFDC9 (WFDC9).